The primary structure comprises 431 residues: Histidinol dehydrogenase (431 aa).

Residues tyrosine 127, glutamine 190, and asparagine 213 each contribute to the NAD(+) site. Residues serine 238, glutamine 260, and histidine 263 each coordinate substrate. Residues glutamine 260 and histidine 263 each contribute to the Zn(2+) site. Catalysis depends on proton acceptor residues glutamate 329 and histidine 330. Positions 330, 363, 417, and 422 each coordinate substrate. Residue aspartate 363 coordinates Zn(2+). Position 422 (histidine 422) interacts with Zn(2+).

Belongs to the histidinol dehydrogenase family. It depends on Zn(2+) as a cofactor.

The enzyme catalyses L-histidinol + 2 NAD(+) + H2O = L-histidine + 2 NADH + 3 H(+). It functions in the pathway amino-acid biosynthesis; L-histidine biosynthesis; L-histidine from 5-phospho-alpha-D-ribose 1-diphosphate: step 9/9. Functionally, catalyzes the sequential NAD-dependent oxidations of L-histidinol to L-histidinaldehyde and then to L-histidine. This Methanopyrus kandleri (strain AV19 / DSM 6324 / JCM 9639 / NBRC 100938) protein is Histidinol dehydrogenase.